A 195-amino-acid polypeptide reads, in one-letter code: Inhibitor of glycogen debranching 1 (195 aa).

Over residues 1–18 the composition is skewed to polar residues; that stretch reads MTDPHLNTPQVSTSPTFE. A disordered region spans residues 1 to 101; it reads MTDPHLNTPQ…ERRSSGPMDF (101 aa). Residue Ser64 is modified to Phosphoserine. Thr65 carries the phosphothreonine modification. The segment covering 75–95 has biased composition (basic and acidic residues); sequence EQARERESSIGEHAPGAERRS. A phosphoserine mark is found at Ser95 and Ser96. Thr132 is modified (phosphothreonine). The interval 146–175 is disordered; sequence NSYLDNNSNGNSARVPHGSPPQLGTRRKSS. Positions 148-157 are enriched in polar residues; sequence YLDNNSNGNS. Phosphoserine is present on Ser164.

As to quaternary structure, interacts with GDB1.

It is found in the cytoplasm. Acts as an inhibitor of GDB1, enhancing the ability of cells to store glucose as glycogen. The chain is Inhibitor of glycogen debranching 1 (IGD1) from Saccharomyces cerevisiae (strain ATCC 204508 / S288c) (Baker's yeast).